The sequence spans 450 residues: Probable ECA polymerase (450 aa).

The next 11 helical transmembrane spans lie at 6–26 (FSGL…LTWF), 37–57 (VFFS…TSVL), 63–83 (VGVA…CFYA), 118–138 (VILM…NGFL), 155–175 (GVAL…VYFL), 181–201 (AWLF…MIVG), 207–227 (IIIA…ISLW), 228–248 (MLAA…LKRY), 341–361 (LVVM…GLII), 378–398 (YKAA…IVLA), and 410–430 (VFFI…YWLF).

This sequence belongs to the WzyE family. As to quaternary structure, probably part of a complex composed of WzxE, WzyE and WzzE.

It localises to the cell inner membrane. Its pathway is bacterial outer membrane biogenesis; enterobacterial common antigen biosynthesis. Probably involved in the polymerization of enterobacterial common antigen (ECA) trisaccharide repeat units. In Escherichia coli O127:H6 (strain E2348/69 / EPEC), this protein is Probable ECA polymerase.